A 481-amino-acid polypeptide reads, in one-letter code: Glutamyl-tRNA(Gln) amidotransferase subunit A (481 aa).

Residues lysine 78 and serine 153 each act as charge relay system in the active site. Catalysis depends on serine 177, which acts as the Acyl-ester intermediate.

The protein belongs to the amidase family. GatA subfamily. As to quaternary structure, heterotrimer of A, B and C subunits.

It carries out the reaction L-glutamyl-tRNA(Gln) + L-glutamine + ATP + H2O = L-glutaminyl-tRNA(Gln) + L-glutamate + ADP + phosphate + H(+). Its function is as follows. Allows the formation of correctly charged Gln-tRNA(Gln) through the transamidation of misacylated Glu-tRNA(Gln) in organisms which lack glutaminyl-tRNA synthetase. The reaction takes place in the presence of glutamine and ATP through an activated gamma-phospho-Glu-tRNA(Gln). The chain is Glutamyl-tRNA(Gln) amidotransferase subunit A from Borreliella afzelii (strain PKo) (Borrelia afzelii).